We begin with the raw amino-acid sequence, 352 residues long: Peptide chain release factor 1 (352 aa).

Q233 carries the N5-methylglutamine modification. The interval 288–309 (NAKDRKEQVGSGDRSERIRTYN) is disordered. Residues 289 to 306 (AKDRKEQVGSGDRSERIR) are compositionally biased toward basic and acidic residues.

The protein belongs to the prokaryotic/mitochondrial release factor family. Post-translationally, methylated by PrmC. Methylation increases the termination efficiency of RF1.

The protein localises to the cytoplasm. In terms of biological role, peptide chain release factor 1 directs the termination of translation in response to the peptide chain termination codons UAG and UAA. The polypeptide is Peptide chain release factor 1 (Helicobacter acinonychis (strain Sheeba)).